Reading from the N-terminus, the 477-residue chain is Sucrose-6-phosphate hydrolase (477 aa).

Substrate is bound by residues 36–39, glutamine 55, tryptophan 63, 98–99, 160–161, glutamate 215, and tryptophan 298; these read WMND, FS, and RD. Aspartate 39 is a catalytic residue.

It belongs to the glycosyl hydrolase 32 family.

It is found in the cytoplasm. It catalyses the reaction Hydrolysis of terminal non-reducing beta-D-fructofuranoside residues in beta-D-fructofuranosides.. Its pathway is glycan biosynthesis; sucrose metabolism. Functionally, enables the bacterium to metabolize sucrose as a sole carbon source. In Escherichia coli, this protein is Sucrose-6-phosphate hydrolase (cscA).